Here is a 305-residue protein sequence, read N- to C-terminus: Tyrosine recombinase XerC (305 aa).

The Core-binding (CB) domain maps to 1-93 (MVLDGFAAHF…SWRQYCVWLV (93 aa)). One can recognise a Tyr recombinase domain in the interval 114 to 294 (RVPKALPQEW…DFDHIARLYD (181 aa)). Active-site residues include arginine 155, lysine 179, histidine 246, arginine 249, and histidine 272. The O-(3'-phospho-DNA)-tyrosine intermediate role is filled by tyrosine 281.

It belongs to the 'phage' integrase family. XerC subfamily. Forms a cyclic heterotetrameric complex composed of two molecules of XerC and two molecules of XerD.

The protein resides in the cytoplasm. Functionally, site-specific tyrosine recombinase, which acts by catalyzing the cutting and rejoining of the recombining DNA molecules. The XerC-XerD complex is essential to convert dimers of the bacterial chromosome into monomers to permit their segregation at cell division. It also contributes to the segregational stability of plasmids. The polypeptide is Tyrosine recombinase XerC (Neisseria meningitidis serogroup C (strain 053442)).